The chain runs to 138 residues: Phosphoribosyl-AMP cyclohydrolase (138 aa).

A Mg(2+)-binding site is contributed by aspartate 84. Cysteine 85 is a binding site for Zn(2+). Aspartate 86 and aspartate 88 together coordinate Mg(2+). Cysteine 102 and cysteine 109 together coordinate Zn(2+).

The protein belongs to the PRA-CH family. As to quaternary structure, homodimer. Requires Mg(2+) as cofactor. Zn(2+) serves as cofactor.

It localises to the cytoplasm. It catalyses the reaction 1-(5-phospho-beta-D-ribosyl)-5'-AMP + H2O = 1-(5-phospho-beta-D-ribosyl)-5-[(5-phospho-beta-D-ribosylamino)methylideneamino]imidazole-4-carboxamide. Its pathway is amino-acid biosynthesis; L-histidine biosynthesis; L-histidine from 5-phospho-alpha-D-ribose 1-diphosphate: step 3/9. Functionally, catalyzes the hydrolysis of the adenine ring of phosphoribosyl-AMP. The sequence is that of Phosphoribosyl-AMP cyclohydrolase from Burkholderia vietnamiensis (strain G4 / LMG 22486) (Burkholderia cepacia (strain R1808)).